The chain runs to 143 residues: MSFTTCILVMIGGALGTLARYVVSVLSLPISRDLPWGTILINVTGSFIIGLFGTLTLAQGRFPVSENVRLFVMIGLCGGYTTFSSFSLQTLDLMRNGAVVRAMVNVCASVVLCVLAVALGHVVAAHWNGGAVQIAQVSIEEDG.

4 consecutive transmembrane segments (helical) span residues 6-26 (CILV…VSVL), 38-58 (TILI…LTLA), 70-90 (LFVM…SLQT), and 103-123 (MVNV…GHVV). 2 residues coordinate Na(+): Gly-78 and Thr-81.

The protein belongs to the fluoride channel Fluc/FEX (TC 1.A.43) family.

The protein resides in the cell inner membrane. It catalyses the reaction fluoride(in) = fluoride(out). Its activity is regulated as follows. Na(+) is not transported, but it plays an essential structural role and its presence is essential for fluoride channel function. In terms of biological role, fluoride-specific ion channel. Important for reducing fluoride concentration in the cell, thus reducing its toxicity. The polypeptide is Fluoride-specific ion channel FluC (Methylobacterium radiotolerans (strain ATCC 27329 / DSM 1819 / JCM 2831 / NBRC 15690 / NCIMB 10815 / 0-1)).